Consider the following 404-residue polypeptide: MSQSGSRLFTSESVTEGHPDKICDAISDSILDALLTDDPRARVAVETLVTTGQVHVAGEVTTSAYADIPKIVRDTVLEIGYDSSAKGFDGNSCGVNVAIGAQSPEIAQGVDHSHEVRTGELSDDEIDRQGAGDQGLMFGFATTDTPELMPLPIALAHRLSRRLTEVRKSGVLPYLRPDGKTQVTIEYDGDKAVRLDTVVISTQHAADIDLDNLLTPDLREKVLGSVLAEIDMPELDVSDIRLLVNPTGKFVLGGPMGDAGLTGRKIIVDTYGGMARHGGGAFSGKDPSKVDRSAAYAMRWVAKNAVAAGLADRIEVQVAYAIGKAAPVGLFVETFGTEKTDPARIQQAITETFDLRPGAIIRDLDLLRPIYAQTAAYGHFGRTDIDLPWESIDRAEKLRAAAGL.

Residue H18 participates in ATP binding. Mg(2+) is bound at residue D20. A K(+)-binding site is contributed by E46. 2 residues coordinate L-methionine: E59 and Q102. The flexible loop stretch occupies residues 102 to 112 (QSPEIAQGVDH). Residues 178–180 (DGK), 249–250 (KF), D258, 264–265 (RK), A281, and K285 contribute to the ATP site. L-methionine is bound at residue D258. Position 289 (K289) interacts with L-methionine.

It belongs to the AdoMet synthase family. As to quaternary structure, homotetramer; dimer of dimers. The cofactor is Mg(2+). Requires K(+) as cofactor.

The protein resides in the cytoplasm. It carries out the reaction L-methionine + ATP + H2O = S-adenosyl-L-methionine + phosphate + diphosphate. The protein operates within amino-acid biosynthesis; S-adenosyl-L-methionine biosynthesis; S-adenosyl-L-methionine from L-methionine: step 1/1. Catalyzes the formation of S-adenosylmethionine (AdoMet) from methionine and ATP. The overall synthetic reaction is composed of two sequential steps, AdoMet formation and the subsequent tripolyphosphate hydrolysis which occurs prior to release of AdoMet from the enzyme. The polypeptide is S-adenosylmethionine synthase (Rhodococcus jostii (strain RHA1)).